Consider the following 251-residue polypeptide: uncharacterized protein (251 aa).

Disordered regions lie at residues 1-92 (MGRP…PGSA) and 137-251 (KPTP…LRTH). A compositionally biased stretch (low complexity) spans 69-92 (AEGAPALLGGSPSSGSPGHPPGSA). Residues 155–172 (SESSWQLPQLPAGSTSGS) show a composition bias toward polar residues.

This is an uncharacterized protein from Homo sapiens (Human).